The primary structure comprises 328 residues: tRNA uridine(34) hydroxylase (328 aa).

The region spanning 130 to 224 is the Rhodanese domain; sequence LDEDTVVLDT…YGKDPEVQGE (95 aa). Catalysis depends on Cys-184, which acts as the Cysteine persulfide intermediate.

This sequence belongs to the TrhO family.

The catalysed reaction is uridine(34) in tRNA + AH2 + O2 = 5-hydroxyuridine(34) in tRNA + A + H2O. Catalyzes oxygen-dependent 5-hydroxyuridine (ho5U) modification at position 34 in tRNAs. The protein is tRNA uridine(34) hydroxylase of Streptococcus gordonii (strain Challis / ATCC 35105 / BCRC 15272 / CH1 / DL1 / V288).